Here is a 392-residue protein sequence, read N- to C-terminus: Protein FAM185A (392 aa).

Residues Tyr-39 to Gly-60 form a disordered region.

This is Protein FAM185A (FAM185A) from Homo sapiens (Human).